We begin with the raw amino-acid sequence, 72 residues long: Large ribosomal subunit protein bL31 (72 aa).

The Zn(2+) site is built by Cys16, Cys18, Cys38, and Cys41.

It belongs to the bacterial ribosomal protein bL31 family. Type A subfamily. Part of the 50S ribosomal subunit. Zn(2+) is required as a cofactor.

In terms of biological role, binds the 23S rRNA. The protein is Large ribosomal subunit protein bL31 of Francisella tularensis subsp. holarctica (strain LVS).